The following is a 154-amino-acid chain: 6,7-dimethyl-8-ribityllumazine synthase (154 aa).

Residues Phe22, 56–58, and 80–82 contribute to the 5-amino-6-(D-ribitylamino)uracil site; these read SFE and AVI. 85–86 contacts (2S)-2-hydroxy-3-oxobutyl phosphate; sequence ST. His88 acts as the Proton donor in catalysis. 5-amino-6-(D-ribitylamino)uracil is bound at residue Tyr113. Arg127 contributes to the (2S)-2-hydroxy-3-oxobutyl phosphate binding site.

Belongs to the DMRL synthase family. In terms of assembly, forms an icosahedral capsid composed of 60 subunits, arranged as a dodecamer of pentamers.

The enzyme catalyses (2S)-2-hydroxy-3-oxobutyl phosphate + 5-amino-6-(D-ribitylamino)uracil = 6,7-dimethyl-8-(1-D-ribityl)lumazine + phosphate + 2 H2O + H(+). Its pathway is cofactor biosynthesis; riboflavin biosynthesis; riboflavin from 2-hydroxy-3-oxobutyl phosphate and 5-amino-6-(D-ribitylamino)uracil: step 1/2. Functionally, catalyzes the formation of 6,7-dimethyl-8-ribityllumazine by condensation of 5-amino-6-(D-ribitylamino)uracil with 3,4-dihydroxy-2-butanone 4-phosphate. This is the penultimate step in the biosynthesis of riboflavin. The sequence is that of 6,7-dimethyl-8-ribityllumazine synthase from Persephonella marina (strain DSM 14350 / EX-H1).